Here is a 236-residue protein sequence, read N- to C-terminus: 2-C-methyl-D-erythritol 4-phosphate cytidylyltransferase (236 aa).

The protein belongs to the IspD/TarI cytidylyltransferase family. IspD subfamily.

It carries out the reaction 2-C-methyl-D-erythritol 4-phosphate + CTP + H(+) = 4-CDP-2-C-methyl-D-erythritol + diphosphate. It functions in the pathway isoprenoid biosynthesis; isopentenyl diphosphate biosynthesis via DXP pathway; isopentenyl diphosphate from 1-deoxy-D-xylulose 5-phosphate: step 2/6. Functionally, catalyzes the formation of 4-diphosphocytidyl-2-C-methyl-D-erythritol from CTP and 2-C-methyl-D-erythritol 4-phosphate (MEP). This Burkholderia multivorans (strain ATCC 17616 / 249) protein is 2-C-methyl-D-erythritol 4-phosphate cytidylyltransferase.